The primary structure comprises 359 residues: Methionine import ATP-binding protein MetN (359 aa).

The segment at 1-21 (MSTPASTPAPDGSHQRDHHPG) is disordered. One can recognise an ABC transporter domain in the interval 24–264 (VEFRGVTKVF…PQTTVAQRFV (241 aa)). Residue 61–68 (GYSGAGKS) coordinates ATP.

This sequence belongs to the ABC transporter superfamily. Methionine importer (TC 3.A.1.24) family. In terms of assembly, the complex is composed of two ATP-binding proteins (MetN), two transmembrane proteins (MetI) and a solute-binding protein (MetQ).

Its subcellular location is the cell membrane. The catalysed reaction is L-methionine(out) + ATP + H2O = L-methionine(in) + ADP + phosphate + H(+). It catalyses the reaction D-methionine(out) + ATP + H2O = D-methionine(in) + ADP + phosphate + H(+). Part of the ABC transporter complex MetNIQ involved in methionine import. Responsible for energy coupling to the transport system. The sequence is that of Methionine import ATP-binding protein MetN from Corynebacterium efficiens (strain DSM 44549 / YS-314 / AJ 12310 / JCM 11189 / NBRC 100395).